A 95-amino-acid polypeptide reads, in one-letter code: Citrate lyase acyl carrier protein (95 aa).

Ser14 carries the O-(phosphoribosyl dephospho-coenzyme A)serine modification.

It belongs to the CitD family. In terms of assembly, oligomer with a subunit composition of (alpha,beta,gamma)6.

Its subcellular location is the cytoplasm. Covalent carrier of the coenzyme of citrate lyase. In Haemophilus influenzae (strain PittGG), this protein is Citrate lyase acyl carrier protein.